A 437-amino-acid chain; its full sequence is Elongation factor 1-gamma (437 aa).

Ala-2 is modified (N-acetylalanine). Positions 2–87 (AAGTLYTYPE…YVSNEELRGS (86 aa)) constitute a GST N-terminal domain. In terms of domain architecture, GST C-terminal spans 88–216 (TPEAAAQVVQ…VKLCEKMAQF (129 aa)). N6-acetyllysine is present on residues Lys-147 and Lys-212. Residues 221–254 (FAETQPKKDTPRKEKGSREEKQKPQAERKEEKKA) are compositionally biased toward basic and acidic residues. Residues 221–268 (FAETQPKKDTPRKEKGSREEKQKPQAERKEEKKAAAPAPEEEMDECEQ) are disordered. Lys-253 participates in a covalent cross-link: Glycyl lysine isopeptide (Lys-Gly) (interchain with G-Cter in SUMO1). The EF-1-gamma C-terminal domain maps to 276-437 (AKDPFAHLPK…KAFNQGKIFK (162 aa)). Residue Lys-285 forms a Glycyl lysine isopeptide (Lys-Gly) (interchain with G-Cter in SUMO2) linkage. The residue at position 401 (Lys-401) is an N6-acetyllysine. Position 434 is an N6-acetyllysine; alternate (Lys-434). The residue at position 434 (Lys-434) is an N6-malonyllysine; alternate.

As to quaternary structure, EF-1 is composed of four subunits: alpha, beta, delta, and gamma.

Probably plays a role in anchoring the complex to other cellular components. This chain is Elongation factor 1-gamma (EEF1G), found in Macaca fascicularis (Crab-eating macaque).